A 171-amino-acid polypeptide reads, in one-letter code: Flavodoxin (171 aa).

A Flavodoxin-like domain is found at 4–166 (IGLFVGTTTG…RIKEWVKQLK (163 aa)).

The protein belongs to the flavodoxin family. Requires FMN as cofactor.

Its function is as follows. Low-potential electron donor to a number of redox enzymes. The sequence is that of Flavodoxin (fld) from Trichodesmium erythraeum (strain IMS101).